A 96-amino-acid chain; its full sequence is Putative regulatory protein DET0036 (96 aa).

It belongs to the RemA family.

The chain is Putative regulatory protein DET0036 from Dehalococcoides mccartyi (strain ATCC BAA-2266 / KCTC 15142 / 195) (Dehalococcoides ethenogenes (strain 195)).